Consider the following 357-residue polypeptide: MGSLESERTVTGYAARDSSGHLSPYTYTLRNKGPEDVIVRVIYCGICHSDLVQMHNEMGMSNYPMVPGHEVVGVVTEIGSEVKKFKVGEHVGVGCIVGSCRSCSNCNGSMEQYCSKRIWTYNDVNHDGTPTQGGFASSMVVDQMFVVRIPENLPLEQAAPLLCAGVTVYSPMKHFGMTEPGKKCGILGLGGVGHMGVKIAKAFGLHVTVISSSDKKKEEALEVLGADAYLVSKDAEKMQEAAESLDYIMDTIPVAHPLEPYLALLKTNGKLVMLGVVPEPLHFVTPLLILGRRSIAGSFIGSMEETQETLDFCAEKKVSSMIEVVGLDYINTAMERLVKNDVRYRFVVDVAASNLDK.

Residue C47 participates in Zn(2+) binding. S49 serves as a coordination point for NADP(+). 7 residues coordinate Zn(2+): H69, E70, C100, C103, C106, C114, and C163. Residues T167, 188 to 193, 211 to 216, T251, G275, and 298 to 300 contribute to the NADP(+) site; these read GLGGVG, SSSDKK, and SFI.

This sequence belongs to the zinc-containing alcohol dehydrogenase family. In terms of assembly, homodimer. Zn(2+) is required as a cofactor.

It carries out the reaction (E)-cinnamyl alcohol + NADP(+) = (E)-cinnamaldehyde + NADPH + H(+). The catalysed reaction is (E)-coniferol + NADP(+) = (E)-coniferaldehyde + NADPH + H(+). The enzyme catalyses (E)-sinapyl alcohol + NADP(+) = (E)-sinapaldehyde + NADPH + H(+). It catalyses the reaction (E)-4-coumaroyl alcohol + NADP(+) = (E)-4-coumaraldehyde + NADPH + H(+). It carries out the reaction (E)-caffeyl alcohol + NADP(+) = (E)-caffeyl aldehyde + NADPH + H(+). It functions in the pathway aromatic compound metabolism; phenylpropanoid biosynthesis. Involved in lignin biosynthesis. Catalyzes the final step specific for the production of lignin monomers. Catalyzes the NADPH-dependent reduction of coniferaldehyde, 5-hydroxyconiferaldehyde, sinapaldehyde, 4-coumaraldehyde and caffeyl aldehyde to their respective alcohols. The protein is Probable cinnamyl alcohol dehydrogenase 7/8 (CAD7) of Picea abies (Norway spruce).